Consider the following 1121-residue polypeptide: Ataxin-2 homolog (1121 aa).

Positions 1–10 (MNNNSKRKTR) are enriched in basic residues. Positions 1–53 (MNNNSKRKTRPSGGGGGGGASGGISRYNANDNSLRPANNKSGAAGNSAGAGAG) are disordered. The segment covering 12–22 (SGGGGGGGASG) has biased composition (gly residues). The span at 27 to 36 (YNANDNSLRP) shows a compositional bias: polar residues. Low complexity predominate over residues 37–47 (ANNKSGAAGNS). Positions 71-146 (FFMHSATALV…VVKIVAKDFD (76 aa)) constitute a Sm domain. Ser219 and Ser232 each carry phosphoserine. Disordered stretches follow at residues 270-376 (FAAV…GQGG), 422-458 (GKVM…GGYQ), 476-935 (MHGS…TTGT), and 1039-1076 (QTPQ…TPPT). Residues 274-310 (ERPEQDHRRDGDRERERNDRDREREERDRDRDRDRGN) are compositionally biased toward basic and acidic residues. Residues 323 to 347 (ETMSSDRYITKQTRGPQMSHVSMSS) show a composition bias toward polar residues. Composition is skewed to gly residues over residues 367-376 (ISGGGAGQGG) and 434-448 (SGGG…GNGN). 2 stretches are compositionally biased toward polar residues: residues 476–487 (MHGSSQYRNPSH) and 499–524 (ANAN…NSLN). Low complexity-rich tracts occupy residues 552–596 (PPLQ…PQRQ), 623–684 (PPQQ…MQHQ), 697–711 (QPHY…QPQP), and 720–773 (QQQQ…APEP). Residues 774–789 (SQQPLPLYHPMPPPQT) show a composition bias toward pro residues. 2 stretches are compositionally biased toward low complexity: residues 807 to 825 (ILTA…TPKP) and 835 to 890 (TTTP…STPV). 2 stretches are compositionally biased toward pro residues: residues 914–926 (PSRP…PVPM) and 1048–1062 (PGQP…PQPS).

The protein belongs to the ataxin-2 family.

It is found in the cytoplasm. Regulator of actin filament formation, though it does not directly assemble with actin filaments. Required for oocyte specification and oocyte positioning in the female germline. Also required for normal eye development and bristle morphology. The polypeptide is Ataxin-2 homolog (Drosophila pseudoobscura pseudoobscura (Fruit fly)).